The sequence spans 476 residues: Carbamoyl phosphate synthase arginine-specific small chain (476 aa).

Residues 1–24 constitute a mitochondrion transit peptide; that stretch reads MFSHLLKPAARSAGLLGHVNRRYL. Residues 228 to 415 enclose the Glutamine amidotransferase type-1 domain; it reads HVALIDCGVK…IQNVQRYKDH (188 aa). Catalysis depends on cysteine 304, which acts as the Nucleophile. Catalysis depends on residues histidine 388 and glutamate 390.

The protein belongs to the CarA family. As to quaternary structure, heterodimer composed of 2 chains; the small (or glutamine) chain promotes the hydrolysis of glutamine to ammonia, which is used by the large (or ammonia) chain to synthesize carbamoyl phosphate.

The protein resides in the mitochondrion matrix. It catalyses the reaction hydrogencarbonate + L-glutamine + 2 ATP + H2O = carbamoyl phosphate + L-glutamate + 2 ADP + phosphate + 2 H(+). The catalysed reaction is L-glutamine + H2O = L-glutamate + NH4(+). The protein operates within amino-acid biosynthesis; L-arginine biosynthesis; carbamoyl phosphate from bicarbonate: step 1/1. Small subunit of the arginine-specific carbamoyl phosphate synthase (CPSase). CPSase catalyzes the formation of carbamoyl phosphate from the ammonia moiety of glutamine, carbonate, and phosphate donated by ATP, the first step of the arginine biosynthetic pathway. The small subunit (glutamine amidotransferase) binds and cleaves glutamine to supply the large subunit with the substrate ammonia. The polypeptide is Carbamoyl phosphate synthase arginine-specific small chain (CPA1) (Phaeosphaeria nodorum (strain SN15 / ATCC MYA-4574 / FGSC 10173) (Glume blotch fungus)).